Reading from the N-terminus, the 236-residue chain is NAD-dependent protein deacetylase (236 aa).

Residues 1 to 236 form the Deacetylase sirtuin-type domain; the sequence is MIKDWLQESN…EFLRSISNEG (236 aa). NAD(+)-binding residues include A18, T22, F29, R30, Q96, V98, D99, and H114. Residue F29 coordinates nicotinamide. 2 residues coordinate nicotinamide: V98 and D99. The active-site Proton acceptor is the H114. Positions 122, 125, 141, and 143 each coordinate Zn(2+). Positions 181, 182, 206, and 225 each coordinate NAD(+).

It belongs to the sirtuin family. Class U subfamily. Zn(2+) serves as cofactor.

It is found in the cytoplasm. It carries out the reaction N(6)-acetyl-L-lysyl-[protein] + NAD(+) + H2O = 2''-O-acetyl-ADP-D-ribose + nicotinamide + L-lysyl-[protein]. Functionally, NAD-dependent protein deacetylase which modulates the activities of several enzymes which are inactive in their acetylated form. The protein is NAD-dependent protein deacetylase of Oceanobacillus iheyensis (strain DSM 14371 / CIP 107618 / JCM 11309 / KCTC 3954 / HTE831).